A 507-amino-acid chain; its full sequence is Ribosomal protein uS12 methylthiotransferase RimO (507 aa).

The 112-residue stretch at 13–124 (RRVALLTLGC…ISDRLGAVLA (112 aa)) folds into the MTTase N-terminal domain. Residues C22, C58, C87, C205, C209, and C212 each coordinate [4Fe-4S] cluster. The region spanning 191–422 (LDTGPVASLK…ALADELCAQR (232 aa)) is the Radical SAM core domain. The region spanning 424-497 (EQRLGSTVQV…GVDLVAVPDA (74 aa)) is the TRAM domain.

This sequence belongs to the methylthiotransferase family. RimO subfamily. It depends on [4Fe-4S] cluster as a cofactor.

The protein resides in the cytoplasm. It carries out the reaction L-aspartate(89)-[ribosomal protein uS12]-hydrogen + (sulfur carrier)-SH + AH2 + 2 S-adenosyl-L-methionine = 3-methylsulfanyl-L-aspartate(89)-[ribosomal protein uS12]-hydrogen + (sulfur carrier)-H + 5'-deoxyadenosine + L-methionine + A + S-adenosyl-L-homocysteine + 2 H(+). Catalyzes the methylthiolation of an aspartic acid residue of ribosomal protein uS12. This is Ribosomal protein uS12 methylthiotransferase RimO from Salinispora tropica (strain ATCC BAA-916 / DSM 44818 / JCM 13857 / NBRC 105044 / CNB-440).